The sequence spans 28 residues: Odorant-binding protein 1 (28 aa).

The protein belongs to the calycin superfamily. Lipocalin family. As to expression, nasal mucosa.

It is found in the secreted. The protein localises to the extracellular space. This soluble protein may play a specific role in odor discrimination and perception. The sequence is that of Odorant-binding protein 1 from Hystrix cristata (North African crested porcupine).